We begin with the raw amino-acid sequence, 171 residues long: ATP synthase subunit b (171 aa).

A helical transmembrane segment spans residues 31–51 (FFVVLAIFLVVLAVIGTFVVP).

This sequence belongs to the ATPase B chain family. In terms of assembly, F-type ATPases have 2 components, F(1) - the catalytic core - and F(0) - the membrane proton channel. F(1) has five subunits: alpha(3), beta(3), gamma(1), delta(1), epsilon(1). F(0) has three main subunits: a(1), b(2) and c(10-14). The alpha and beta chains form an alternating ring which encloses part of the gamma chain. F(1) is attached to F(0) by a central stalk formed by the gamma and epsilon chains, while a peripheral stalk is formed by the delta and b chains.

The protein resides in the cell membrane. Functionally, f(1)F(0) ATP synthase produces ATP from ADP in the presence of a proton or sodium gradient. F-type ATPases consist of two structural domains, F(1) containing the extramembraneous catalytic core and F(0) containing the membrane proton channel, linked together by a central stalk and a peripheral stalk. During catalysis, ATP synthesis in the catalytic domain of F(1) is coupled via a rotary mechanism of the central stalk subunits to proton translocation. Its function is as follows. Component of the F(0) channel, it forms part of the peripheral stalk, linking F(1) to F(0). This chain is ATP synthase subunit b, found in Mycobacterium bovis (strain ATCC BAA-935 / AF2122/97).